The following is a 287-amino-acid chain: Ferredoxin-type protein NapH (287 aa).

Topologically, residues 1–29 are cytoplasmic; the sequence is MANRKRDAGREALEKKGWWRSHRWLVLRR. Residues 30-50 traverse the membrane as a helical segment; the sequence is LCQFFVLGMFLSGPWFGVWIL. At 51 to 79 the chain is on the periplasmic side; sequence HGNYSSSLLFDTVPLTDPLMTLQSLASGH. Residues 80–100 form a helical membrane-spanning segment; it reads LPATVALTGAVIITVLYALAG. At 101–139 the chain is on the cytoplasmic side; it reads KRLFCSWVCPLNPITDLANWLRRRFDLNQSATIPRHIRY. A helical membrane pass occupies residues 140-160; that stretch reads VLLVVILVGSALTGTLIWEWI. Residues 161–170 are Periplasmic-facing; it reads NPVSLMGRSL. A helical membrane pass occupies residues 171-191; that stretch reads VMGFGSGALLILALFLFDLLV. At 192–287 the chain is on the cytoplasmic side; it reads VEHGWCGHIC…TTRWSSGAKS (96 aa). 2 4Fe-4S ferredoxin-type domains span residues 217 to 247 and 251 to 280; these read TVAA…APVL and SPVQ…ITTR. [4Fe-4S] cluster contacts are provided by cysteine 226, cysteine 229, cysteine 232, cysteine 236, cysteine 260, cysteine 263, cysteine 266, and cysteine 270.

Interacts with NapC. The cofactor is [4Fe-4S] cluster.

The protein localises to the cell inner membrane. Functionally, required for electron transfer from ubiquinol, via NapC, to the periplasmic nitrate reductase NapAB complex. The polypeptide is Ferredoxin-type protein NapH (napH) (Escherichia coli (strain K12)).